We begin with the raw amino-acid sequence, 145 residues long: Small ribosomal subunit protein eS12A (145 aa).

It belongs to the eukaryotic ribosomal protein eS12 family. As to quaternary structure, component of the small ribosomal subunit (SSU). Mature yeast ribosomes consist of a small (40S) and a large (60S) subunit. The 40S small subunit contains 1 molecule of ribosomal RNA (18S rRNA) and at least 33 different proteins. The large 60S subunit contains 3 rRNA molecules (25S, 5.8S and 5S rRNA) and at least 46 different proteins.

The protein resides in the cytoplasm. Functionally, component of the ribosome, a large ribonucleoprotein complex responsible for the synthesis of proteins in the cell. The small ribosomal subunit (SSU) binds messenger RNAs (mRNAs) and translates the encoded message by selecting cognate aminoacyl-transfer RNA (tRNA) molecules. The large subunit (LSU) contains the ribosomal catalytic site termed the peptidyl transferase center (PTC), which catalyzes the formation of peptide bonds, thereby polymerizing the amino acids delivered by tRNAs into a polypeptide chain. The nascent polypeptides leave the ribosome through a tunnel in the LSU and interact with protein factors that function in enzymatic processing, targeting, and the membrane insertion of nascent chains at the exit of the ribosomal tunnel. The polypeptide is Small ribosomal subunit protein eS12A (rps1201) (Schizosaccharomyces pombe (strain 972 / ATCC 24843) (Fission yeast)).